The sequence spans 303 residues: Magainins (303 aa).

A signal peptide spans 1 to 18 (MFKGLFICSLIAVICANA). 13 consecutive propeptides follow at residues 19–26 (LPQPEASA), 33–36 (REVR), 62–72 (DAEAVGPEAFA), 79–82 (REVR), 108–118 (DAEAVGPEAFA), 125–128 (REVR), 154–164 (DAEAVGPEAFA), 171–174 (REVR), 200–210 (DAEAVGPEAFA), 217–220 (REVR), 246–256 (DAEAVGPEAFA), 263–266 (REVR), and 292–303 (DAEAVDDRRWVE).

Belongs to the gastrin/cholecystokinin family. Magainin subfamily. In terms of tissue distribution, synthesized in the stomach and stored in a novel granular multinucleated cell in the gastric mucosa. It is stored as active, processed peptides in large granules within the granular gland secretions of the skin.

Its subcellular location is the secreted. In terms of biological role, antimicrobial peptides that inhibit the growth of numerous species of bacteria and fungi and induce osmotic lysis of protozoa. Rapidly inactivates channel catfish herpesvirus (ED(50)=48 uM) over a wide temperature range. Magainins are membrane lytic agents. This is Magainins (magainins) from Xenopus laevis (African clawed frog).